The sequence spans 192 residues: Small ribosomal subunit protein eS7 (192 aa).

This sequence belongs to the eukaryotic ribosomal protein eS7 family.

This chain is Small ribosomal subunit protein eS7 (RpS7), found in Anopheles gambiae (African malaria mosquito).